The following is a 606-amino-acid chain: Peptide-N(4)-(N-acetyl-beta-glucosaminyl)asparagine amidase (606 aa).

Residues proline 2–serine 108 form the Thioredoxin domain. 4 residues coordinate Zn(2+): cysteine 191, cysteine 194, cysteine 225, and cysteine 228. Catalysis depends on cysteine 251, which acts as the Nucleophile. Residues histidine 278 and aspartate 295 contribute to the active site. The PAW domain maps to aspartate 404–asparagine 606.

Belongs to the transglutaminase-like superfamily. PNGase family. Zn(2+) is required as a cofactor.

Its subcellular location is the cytoplasm. It localises to the endoplasmic reticulum. The catalysed reaction is Hydrolysis of an N(4)-(acetyl-beta-D-glucosaminyl)asparagine residue in which the glucosamine residue may be further glycosylated, to yield a (substituted) N-acetyl-beta-D-glucosaminylamine and a peptide containing an aspartate residue.. Inhibited by Zn(2+) and z-VAD-fmk (caspase inhibitor) but unaffected by EDTA. Functionally, specifically deglycosylates the denatured form of N-linked glycoproteins in the cytoplasm and assists their proteasome-mediated degradation. Cleaves the beta-aspartyl-glucosamine (GlcNAc) of the glycan and the amide side chain of Asn, converting Asn to Asp. Prefers proteins containing high-mannose over those bearing complex type oligosaccharides. Can recognize misfolded proteins in the endoplasmic reticulum that are exported to the cytosol to be destroyed and deglycosylate them, while it has no activity toward native proteins. Deglycosylation is a prerequisite for subsequent proteasome-mediated degradation of some, but not all, misfolded glycoproteins. Also displays oxidoreductase (thioredoxin) activity. Involved in regulating the expression of proteasomal subunits such as rpt-3 in order to confer resistance to proteasomal dysfunction. The chain is Peptide-N(4)-(N-acetyl-beta-glucosaminyl)asparagine amidase (png-1) from Caenorhabditis elegans.